A 398-amino-acid chain; its full sequence is Phosphoglycerate kinase (398 aa).

Substrate-binding positions include 22–24 (DFN), arginine 38, 61–64 (HLGR), arginine 120, and arginine 153. Residues lysine 206, glycine 297, glutamate 328, and 354-357 (GGDT) each bind ATP.

This sequence belongs to the phosphoglycerate kinase family. In terms of assembly, monomer.

The protein localises to the cytoplasm. It catalyses the reaction (2R)-3-phosphoglycerate + ATP = (2R)-3-phospho-glyceroyl phosphate + ADP. It functions in the pathway carbohydrate degradation; glycolysis; pyruvate from D-glyceraldehyde 3-phosphate: step 2/5. The chain is Phosphoglycerate kinase from Nautilia profundicola (strain ATCC BAA-1463 / DSM 18972 / AmH).